Here is a 226-residue protein sequence, read N- to C-terminus: Ribonuclease 3 (226 aa).

The RNase III domain occupies Ile2 to Gly129. Glu42 lines the Mg(2+) pocket. Asp46 is a catalytic residue. The Mg(2+) site is built by Asn115 and Glu118. The active site involves Glu118. In terms of domain architecture, DRBM spans Asp154–Asn223.

This sequence belongs to the ribonuclease III family. Homodimer. The cofactor is Mg(2+).

It localises to the cytoplasm. The enzyme catalyses Endonucleolytic cleavage to 5'-phosphomonoester.. Digests double-stranded RNA. Involved in the processing of primary rRNA transcript to yield the immediate precursors to the large and small rRNAs (23S and 16S). Processes some mRNAs, and tRNAs when they are encoded in the rRNA operon. Processes pre-crRNA and tracrRNA of type II CRISPR loci if present in the organism. The sequence is that of Ribonuclease 3 from Ehrlichia chaffeensis (strain ATCC CRL-10679 / Arkansas).